The sequence spans 361 residues: Phospho-N-acetylmuramoyl-pentapeptide-transferase (361 aa).

The next 10 membrane-spanning stretches (helical) occupy residues 25 to 45, 72 to 92, 95 to 115, 135 to 155, 169 to 189, 200 to 220, 240 to 260, 264 to 284, 289 to 309, and 338 to 358; these read TGGAVVTGALFVFLCGPWIID, TPTMGGLMILSGLTVGTVLWA, LNPYVWIVLAVTLGFGFVGFY, LLIEFAIAGAACFALVWLGRG, VVLNLGWYFVIFGAFVIVGAG, GLAIVPVMIAAASFGMISYLV, LAVLCGALLGAGLGFLWFNAP, IFMGDTGSLALGGMLGSIAVA, IVLAVIGGLFVLEAVSVIVQV, and QIVIRFWIIAVILALAGLSTL.

Belongs to the glycosyltransferase 4 family. MraY subfamily. Mg(2+) is required as a cofactor.

It localises to the cell inner membrane. It carries out the reaction UDP-N-acetyl-alpha-D-muramoyl-L-alanyl-gamma-D-glutamyl-meso-2,6-diaminopimeloyl-D-alanyl-D-alanine + di-trans,octa-cis-undecaprenyl phosphate = di-trans,octa-cis-undecaprenyl diphospho-N-acetyl-alpha-D-muramoyl-L-alanyl-D-glutamyl-meso-2,6-diaminopimeloyl-D-alanyl-D-alanine + UMP. It participates in cell wall biogenesis; peptidoglycan biosynthesis. In terms of biological role, catalyzes the initial step of the lipid cycle reactions in the biosynthesis of the cell wall peptidoglycan: transfers peptidoglycan precursor phospho-MurNAc-pentapeptide from UDP-MurNAc-pentapeptide onto the lipid carrier undecaprenyl phosphate, yielding undecaprenyl-pyrophosphoryl-MurNAc-pentapeptide, known as lipid I. This chain is Phospho-N-acetylmuramoyl-pentapeptide-transferase, found in Rhodopseudomonas palustris (strain HaA2).